Reading from the N-terminus, the 518-residue chain is MNSQVIIFDTTLRDGEQALQASLSVKQKLQIALSLENTGIDIIEVGFPISSPGDFKSVQTISKNIKNSRICSLARCLDKDIDAAAEAMHSSNAFRIHIFLATSILHMESKLKKNFDQIIDMAITSVKRALRYTDDVEFSCEDASRTTMDNLCRIVEKLINAGVKTINIPDTVGYTVPNELSSIIHNLFQRVPNIDKSIISVHCHNDLGMAVGNSISAIQAGARQIEGTINGIGERAGNTALEEVIIAIKVREDVLGVSTKIKHKEIYRTSQIISQICNLPIPPNKAIVGSNAFAHSSGIHQDGVLKNRKNYEIMEPSSIGLKEVKLNLTSRSGRAAVKHYMTEMGYRECDYKIDELYASFLKLADKKGQVFDYDLEALAFINQQQEELEHFSLSFFSVQSISNGLSTASVKLLCGKKTFIESATTSNGPIDAIYQALNRITHFPIILQKYQLIAKGKGKDALGQVDILVEHKKRKFHGMGLATDIIESSAQAMVNVLNNIWKANQVNEKLKKLKKINN.

Residues 5 to 267 form the Pyruvate carboxyltransferase domain; it reads VIIFDTTLRD…STKIKHKEIY (263 aa). Residues D14, H202, H204, and N238 each coordinate Mn(2+). Residues 392–518 are regulatory domain; it reads SLSFFSVQSI…KLKKLKKINN (127 aa).

It belongs to the alpha-IPM synthase/homocitrate synthase family. LeuA type 1 subfamily. As to quaternary structure, homodimer. It depends on Mn(2+) as a cofactor.

The protein localises to the cytoplasm. It catalyses the reaction 3-methyl-2-oxobutanoate + acetyl-CoA + H2O = (2S)-2-isopropylmalate + CoA + H(+). It participates in amino-acid biosynthesis; L-leucine biosynthesis; L-leucine from 3-methyl-2-oxobutanoate: step 1/4. In terms of biological role, catalyzes the condensation of the acetyl group of acetyl-CoA with 3-methyl-2-oxobutanoate (2-ketoisovalerate) to form 3-carboxy-3-hydroxy-4-methylpentanoate (2-isopropylmalate). The chain is 2-isopropylmalate synthase from Buchnera aphidicola subsp. Rhopalosiphum padi.